The sequence spans 297 residues: Methionyl-tRNA formyltransferase (297 aa).

A disordered region spans residues 31-52 (QPPRAAGRGQKPRPSPVHRAAE). 108 to 111 (SLLP) lines the (6S)-5,6,7,8-tetrahydrofolate pocket.

This sequence belongs to the Fmt family.

The enzyme catalyses L-methionyl-tRNA(fMet) + (6R)-10-formyltetrahydrofolate = N-formyl-L-methionyl-tRNA(fMet) + (6S)-5,6,7,8-tetrahydrofolate + H(+). In terms of biological role, attaches a formyl group to the free amino group of methionyl-tRNA(fMet). The formyl group appears to play a dual role in the initiator identity of N-formylmethionyl-tRNA by promoting its recognition by IF2 and preventing the misappropriation of this tRNA by the elongation apparatus. This is Methionyl-tRNA formyltransferase from Paracoccus denitrificans (strain Pd 1222).